We begin with the raw amino-acid sequence, 351 residues long: Histidinol-phosphate aminotransferase (351 aa).

The tract at residues 1–26 is disordered; sequence MRFRAELEPLSPYNPPRASQEAAAER. K223 carries the post-translational modification N6-(pyridoxal phosphate)lysine.

The protein belongs to the class-II pyridoxal-phosphate-dependent aminotransferase family. Histidinol-phosphate aminotransferase subfamily. In terms of assembly, homodimer. The cofactor is pyridoxal 5'-phosphate.

It catalyses the reaction L-histidinol phosphate + 2-oxoglutarate = 3-(imidazol-4-yl)-2-oxopropyl phosphate + L-glutamate. The protein operates within amino-acid biosynthesis; L-histidine biosynthesis; L-histidine from 5-phospho-alpha-D-ribose 1-diphosphate: step 7/9. This Rubrobacter xylanophilus (strain DSM 9941 / JCM 11954 / NBRC 16129 / PRD-1) protein is Histidinol-phosphate aminotransferase.